Here is a 71-residue protein sequence, read N- to C-terminus: Small ribosomal subunit protein bS18 (71 aa).

It belongs to the bacterial ribosomal protein bS18 family. Part of the 30S ribosomal subunit. Forms a tight heterodimer with protein bS6.

Binds as a heterodimer with protein bS6 to the central domain of the 16S rRNA, where it helps stabilize the platform of the 30S subunit. This is Small ribosomal subunit protein bS18 from Nostoc sp. (strain PCC 7120 / SAG 25.82 / UTEX 2576).